Consider the following 247-residue polypeptide: Type III pantothenate kinase (247 aa).

7-14 provides a ligand contact to ATP; it reads AIGNSRWH. Residues tyrosine 91 and 95–98 contribute to the substrate site; that span reads GLDR. The active-site Proton acceptor is the aspartate 97. Aspartate 117 is a K(+) binding site. Residue threonine 120 participates in ATP binding.

It belongs to the type III pantothenate kinase family. In terms of assembly, homodimer. Requires NH4(+) as cofactor. K(+) serves as cofactor.

It localises to the cytoplasm. It catalyses the reaction (R)-pantothenate + ATP = (R)-4'-phosphopantothenate + ADP + H(+). It functions in the pathway cofactor biosynthesis; coenzyme A biosynthesis; CoA from (R)-pantothenate: step 1/5. Catalyzes the phosphorylation of pantothenate (Pan), the first step in CoA biosynthesis. This Synechococcus sp. (strain ATCC 27144 / PCC 6301 / SAUG 1402/1) (Anacystis nidulans) protein is Type III pantothenate kinase.